We begin with the raw amino-acid sequence, 178 residues long: Crossover junction endodeoxyribonuclease RuvC (178 aa).

Active-site residues include aspartate 8, glutamate 72, and aspartate 144. Positions 8, 72, and 144 each coordinate Mg(2+).

The protein belongs to the RuvC family. As to quaternary structure, homodimer which binds Holliday junction (HJ) DNA. The HJ becomes 2-fold symmetrical on binding to RuvC with unstacked arms; it has a different conformation from HJ DNA in complex with RuvA. In the full resolvosome a probable DNA-RuvA(4)-RuvB(12)-RuvC(2) complex forms which resolves the HJ. Mg(2+) is required as a cofactor.

The protein localises to the cytoplasm. The enzyme catalyses Endonucleolytic cleavage at a junction such as a reciprocal single-stranded crossover between two homologous DNA duplexes (Holliday junction).. Its function is as follows. The RuvA-RuvB-RuvC complex processes Holliday junction (HJ) DNA during genetic recombination and DNA repair. Endonuclease that resolves HJ intermediates. Cleaves cruciform DNA by making single-stranded nicks across the HJ at symmetrical positions within the homologous arms, yielding a 5'-phosphate and a 3'-hydroxyl group; requires a central core of homology in the junction. The consensus cleavage sequence is 5'-(A/T)TT(C/G)-3'. Cleavage occurs on the 3'-side of the TT dinucleotide at the point of strand exchange. HJ branch migration catalyzed by RuvA-RuvB allows RuvC to scan DNA until it finds its consensus sequence, where it cleaves and resolves the cruciform DNA. The chain is Crossover junction endodeoxyribonuclease RuvC from Idiomarina loihiensis (strain ATCC BAA-735 / DSM 15497 / L2-TR).